The sequence spans 601 residues: Glutathione-regulated potassium-efflux system protein KefB (601 aa).

The next 13 helical transmembrane spans lie at alanine 4–alanine 24, isoleucine 29–phenylalanine 49, glutamate 55–leucine 75, isoleucine 87–methionine 107, phenylalanine 111–alanine 131, valine 152–glycine 172, histidine 177–glycine 197, phenylalanine 207–serine 227, leucine 230–leucine 250, alanine 262–leucine 282, leucine 284–isoleucine 304, methionine 324–alanine 344, and alanine 356–isoleucine 376. In terms of domain architecture, RCK N-terminal spans lysine 400–threonine 519.

The protein belongs to the monovalent cation:proton antiporter 2 (CPA2) transporter (TC 2.A.37) family. KefB subfamily. In terms of assembly, interacts with the regulatory subunit KefG.

The protein localises to the cell inner membrane. In terms of biological role, pore-forming subunit of a potassium efflux system that confers protection against electrophiles. Catalyzes K(+)/H(+) antiport. The chain is Glutathione-regulated potassium-efflux system protein KefB from Salmonella schwarzengrund (strain CVM19633).